A 328-amino-acid chain; its full sequence is 3,4-dihydroxyphenylacetaldehyde synthase 2 (328 aa).

Residue asparagine 111 is part of the active site. Position 222 is an N6-(pyridoxal phosphate)lysine (lysine 222).

It belongs to the group II decarboxylase family. Pyridoxal 5'-phosphate is required as a cofactor.

The catalysed reaction is L-dopa + O2 + H2O + H(+) = 3,4-dihydroxyphenylacetaldehyde + H2O2 + NH4(+) + CO2. In terms of biological role, catalyzes the decarboxylation-oxidative deamination of L-3,4-dihydroxyphenylalanine (L-DOPA) to 3,4-dihydroxylphenylacetaldehyde (DHPAA). Involved in cuticle development. Probably responsible for the protein cross-linking during the development of flexible cuticles. This chain is 3,4-dihydroxyphenylacetaldehyde synthase 2 (amd), found in Drosophila simulans (Fruit fly).